Here is a 523-residue protein sequence, read N- to C-terminus: 3-hydroxybenzoate--CoA ligase (523 aa).

It belongs to the ATP-dependent AMP-binding enzyme family. Benzoate-CoA ligase subfamily.

The enzyme catalyses 3-hydroxybenzoate + ATP + CoA = 3-hydroxybenzoyl-CoA + AMP + diphosphate. It catalyses the reaction 4-hydroxybenzoate + ATP + CoA = 4-hydroxybenzoyl-CoA + AMP + diphosphate. Functionally, ligase involved in the anaerobic degradation of 3-hydroxybenzoate (3OHBz). Catalyzes the activation of 3-hydroxybenzoate to 3-hydroxybenzoyl-CoA. Also shows high activity with protocatechuate and 4-hydroxybenzoate. Exhibits lower activity with benzoate, but cannot use 2-hydroxybenzoate or benzoate analogs containing other substituents at the ortho position, such as 2-aminobenzoate (anthranilate). The polypeptide is 3-hydroxybenzoate--CoA ligase (Aromatoleum sp. (strain CIB) (Azoarcus sp. (strain CIB))).